Here is a 473-residue protein sequence, read N- to C-terminus: Vasculin (473 aa).

Disordered stretches follow at residues 1-26 (MAQHDFAPAWLNFPTPPSSTKSSLNF), 44-163 (RRRH…EYPP), 196-240 (SQPV…SFPH), 258-286 (NFSPSTTSVKECNRSNSSSPVDKLNQQPR), and 305-342 (LKRDRVEEEHEDESHVGSEKDDDSFNLHNSNSTHQERD). Ser49 carries the phosphoserine modification. Omega-N-methylarginine is present on Arg87. The span at 93-107 (GSSRSRSSIFHSGKS) shows a compositional bias: low complexity. The segment covering 119–133 (ETGRKDDKRERKQFE) has biased composition (basic and acidic residues). Phosphoserine occurs at positions 274, 276, 322, and 381. Residues 305–329 (LKRDRVEEEHEDESHVGSEKDDDSF) show a composition bias toward basic and acidic residues. The segment at 444–473 (GPWKNSTFKPTIENDDTETSSSDTSDDDDV) is disordered. The span at 456-473 (ENDDTETSSSDTSDDDDV) shows a compositional bias: acidic residues.

The protein belongs to the vasculin family. As to quaternary structure, interacts with GTF2B, GTF2F2, RNA polymerase II and TBP.

Its subcellular location is the nucleus. Functions as a GC-rich promoter-specific transactivating transcription factor. This Bos taurus (Bovine) protein is Vasculin (GPBP1).